We begin with the raw amino-acid sequence, 310 residues long: MEAQNHTTVKEFILLGLTENSTLRVILFMIFLGIYTVTLVGNFSIISLIRSCPQLHTPMYLFLSHLALVDIGFSTSITPIMLTGFLGHTVTLSVAACVAQFCIAVTFGTVECFLLAVMAYDRYVAICSPLLYSTHMSPRICFLLVGASYVGGCVNSGTFTSCLLILSFCGPNQIDHFFCDFPAVLKLSCSDVSIIGIIPSISAGSIIVITVFVIAVSYTYILITILNMRSTEGRHKAFSTCTSHLTAVTLYYGTITFIYVMPKSNYSTAQNKILSVFYTVVIPMLNPLIYSLRNRDVKEALRKAIIRIFP.

The Extracellular segment spans residues 1–25 (MEAQNHTTVKEFILLGLTENSTLRV). 2 N-linked (GlcNAc...) asparagine glycosylation sites follow: Asn5 and Asn20. Residues 26–46 (ILFMIFLGIYTVTLVGNFSII) form a helical membrane-spanning segment. Over 47–54 (SLIRSCPQ) the chain is Cytoplasmic. The chain crosses the membrane as a helical span at residues 55–75 (LHTPMYLFLSHLALVDIGFST). Over 76–99 (SITPIMLTGFLGHTVTLSVAACVA) the chain is Extracellular. Cys97 and Cys189 are disulfide-bonded. Residues 100 to 120 (QFCIAVTFGTVECFLLAVMAY) traverse the membrane as a helical segment. Residues 121-133 (DRYVAICSPLLYS) are Cytoplasmic-facing. A helical membrane pass occupies residues 134–154 (THMSPRICFLLVGASYVGGCV). Residues 155–196 (NSGTFTSCLLILSFCGPNQIDHFFCDFPAVLKLSCSDVSIIG) are Extracellular-facing. A helical membrane pass occupies residues 197–217 (IIPSISAGSIIVITVFVIAVS). The Cytoplasmic segment spans residues 218–237 (YTYILITILNMRSTEGRHKA). Residues 238-258 (FSTCTSHLTAVTLYYGTITFI) traverse the membrane as a helical segment. The Extracellular portion of the chain corresponds to 259-271 (YVMPKSNYSTAQN). N-linked (GlcNAc...) asparagine glycosylation is present at Asn265. A helical transmembrane segment spans residues 272–292 (KILSVFYTVVIPMLNPLIYSL). The Cytoplasmic portion of the chain corresponds to 293-310 (RNRDVKEALRKAIIRIFP).

Belongs to the G-protein coupled receptor 1 family.

It localises to the cell membrane. In terms of biological role, potential odorant receptor. This chain is Olfactory receptor 5P56, found in Mus musculus (Mouse).